The chain runs to 154 residues: Ribonuclease H (154 aa).

The 142-residue stretch at 1 to 142 (MRKQVEIFTD…CDELARAAAS (142 aa)) folds into the RNase H type-1 domain. Residues Asp-10, Glu-48, Asp-70, and Asp-134 each coordinate Mg(2+).

The protein belongs to the RNase H family. As to quaternary structure, monomer. Mg(2+) is required as a cofactor.

Its subcellular location is the cytoplasm. The enzyme catalyses Endonucleolytic cleavage to 5'-phosphomonoester.. Endonuclease that specifically degrades the RNA of RNA-DNA hybrids. The polypeptide is Ribonuclease H (Pectobacterium atrosepticum (strain SCRI 1043 / ATCC BAA-672) (Erwinia carotovora subsp. atroseptica)).